Reading from the N-terminus, the 85-residue chain is Large ribosomal subunit protein bL27 (85 aa).

The segment at 1–21 (MAHKKGGGTTRNGRDSESKRL) is disordered.

It belongs to the bacterial ribosomal protein bL27 family.

The protein is Large ribosomal subunit protein bL27 of Janthinobacterium sp. (strain Marseille) (Minibacterium massiliensis).